The following is a 275-amino-acid chain: Large ribosomal subunit protein uL2c (275 aa).

Residues 225-275 form a disordered region; it reads MNPCDHPHGGGEGRSPIGRPRPVSPWGKPALGQRTRKGHKYSDQMILRRRK.

The protein belongs to the universal ribosomal protein uL2 family. As to quaternary structure, part of the 50S ribosomal subunit.

The protein resides in the plastid. It is found in the chloroplast. In Oltmannsiellopsis viridis (Marine flagellate), this protein is Large ribosomal subunit protein uL2c (rpl2).